We begin with the raw amino-acid sequence, 475 residues long: UDP-N-acetylmuramate--L-alanine ligase (475 aa).

117–123 is an ATP binding site; the sequence is GTHGKTT.

This sequence belongs to the MurCDEF family.

It is found in the cytoplasm. The catalysed reaction is UDP-N-acetyl-alpha-D-muramate + L-alanine + ATP = UDP-N-acetyl-alpha-D-muramoyl-L-alanine + ADP + phosphate + H(+). The protein operates within cell wall biogenesis; peptidoglycan biosynthesis. Cell wall formation. In Chlorobaculum tepidum (strain ATCC 49652 / DSM 12025 / NBRC 103806 / TLS) (Chlorobium tepidum), this protein is UDP-N-acetylmuramate--L-alanine ligase.